The following is a 445-amino-acid chain: Acetylcholine-gated chloride channel subunit acc-2 (445 aa).

The signal sequence occupies residues 1–26 (MIFTLLSTLPVLIITTELDYSELVHS). At 27–258 (AELVSSSSYI…LHVTIIFERR (232 aa)) the chain is on the extracellular side. Residues Asn-46, Asn-59, Asn-121, and Asn-162 are each glycosylated (N-linked (GlcNAc...) asparagine). A disulfide bond links Cys-177 and Cys-191. Asn-218 carries an N-linked (GlcNAc...) asparagine glycan. A helical membrane pass occupies residues 259–279 (FIWYFMQAYLPTYLTIFISWI). Over 280–286 (SFSLGSR) the chain is Cytoplasmic. The chain crosses the membrane as a helical span at residues 287–307 (AIPARTMLGVNSLLAIVFSFG). The Extracellular segment spans residues 308–326 (NIMRNLPRVSYIKGIDVWM). The helical transmembrane segment at 327–347 (LVSMTFIFCSLLELAIVGFMV) threads the bilayer. Residues 348-407 (RDETVAKKKQQKKISGNISREESPHGIISERRFMFPPGCSESSKSLSSCTSGWTPERIDS) are Cytoplasmic-facing. A helical transmembrane segment spans residues 408 to 428 (ISSVMFPFSFFVFNIIYWFYY). The Extracellular portion of the chain corresponds to 429–445 (IHRKEIIKQNLINRVDG).

It belongs to the ligand-gated ion channel (TC 1.A.9) family. Homopentamer (in vitro). May interact with either acc-3 or acc-4; the interactions do not result in significant heteropentameric ion channel activity. Expressed in RIA, RIG, PHA and AIZ glutamatergic neurons, URX and RIH cholinergic neurons, and in male-specific MCM neurons.

It localises to the cell membrane. Functionally, acetylcholine-gated chloride channel subunit. Currents in channels are triggered in response to acetylcholine. Channel properties may be modulated by the formation of homomeric and heteromeric channels. The polypeptide is Acetylcholine-gated chloride channel subunit acc-2 (Caenorhabditis elegans).